The primary structure comprises 512 residues: Gamma-aminobutyric acid receptor subunit beta-2 (512 aa).

An N-terminal signal peptide occupies residues 1 to 25; sequence MWRVRKRGYFGIWSFPLIIAAVCAQ. The Extracellular segment spans residues 26 to 244; sequence SVNDPSNMSL…SFKLKRNIGY (219 aa). N-linked (GlcNAc...) asparagine glycans are attached at residues Asn32 and Asn104. Tyr121 contacts histamine. Cys160 and Cys174 are oxidised to a cystine. Asn173 carries N-linked (GlcNAc...) asparagine glycosylation. Residues 180–181 and Thr226 contribute to the histamine site; that span reads SY. Tyr181 and Thr226 together coordinate 4-aminobutanoate. The next 3 membrane-spanning stretches (helical) occupy residues 245 to 266, 270 to 292, and 304 to 326; these read FILQ…SFWI, ASAA…NTHL, and AIDM…YALV. Residues 327–489 are Cytoplasmic-facing; that stretch reads NYIFFGRGPQ…DLTDVNAIDR (163 aa). Tyr441 bears the Phosphotyrosine mark. A helical membrane pass occupies residues 490–511; the sequence is WSRIFFPVVFSFFNIVYWLYYV.

It belongs to the ligand-gated ion channel (TC 1.A.9) family. Gamma-aminobutyric acid receptor (TC 1.A.9.5) subfamily. GABRB2 sub-subfamily. As to quaternary structure, heteropentamer, formed by a combination of alpha (GABRA1-6), beta (GABRB1-3), gamma (GABRG1-3), delta (GABRD), epsilon (GABRE), rho (GABRR1-3), pi (GABRP) and theta (GABRQ) chains, each subunit exhibiting distinct physiological and pharmacological properties. Interacts with UBQLN1. May interact with KIF21B. Identified in a complex of 720 kDa composed of LHFPL4, NLGN2, GABRA1, GABRB2, GABRG2 and GABRB3. In terms of processing, glycosylated.

It is found in the postsynaptic cell membrane. It localises to the cell membrane. The protein resides in the cytoplasmic vesicle. The catalysed reaction is chloride(in) = chloride(out). With respect to regulation, allosterically activated by benzodiazepines and the anesthetic etomidate. Inhibited by the antagonist bicuculline. Potentiated by histamine. In terms of biological role, beta subunit of the heteropentameric ligand-gated chloride channel gated by gamma-aminobutyric acid (GABA), a major inhibitory neurotransmitter in the brain. GABA-gated chloride channels, also named GABA(A) receptors (GABAAR), consist of five subunits arranged around a central pore and contain GABA active binding site(s) located at the alpha and beta subunit interface(s). When activated by GABA, GABAARs selectively allow the flow of chloride anions across the cell membrane down their electrochemical gradient. Chloride influx into the postsynaptic neuron following GABAAR opening decreases the neuron ability to generate a new action potential, thereby reducing nerve transmission. GABAARs containing alpha-1 and beta-2 or -3 subunits exhibit synaptogenic activity; the gamma-2 subunit being necessary but not sufficient to induce rapid synaptic contacts formation. Extrasynaptic beta-2 receptors contribute to the tonic GABAergic inhibition. Beta-containing GABAARs can simultaneously bind GABA and histamine where histamine binds at the interface of two neighboring beta subunits, which may be involved in the regulation of sleep and wakefulness. The polypeptide is Gamma-aminobutyric acid receptor subunit beta-2 (Mus musculus (Mouse)).